Reading from the N-terminus, the 225-residue chain is 3-dehydroquinate dehydratase (225 aa).

3-dehydroquinate contacts are provided by residues Ser-6, 30-32, and Arg-62; that span reads EWR. His-118 (proton donor/acceptor) is an active-site residue. Lys-143 (schiff-base intermediate with substrate) is an active-site residue. Residues Arg-186, Ser-205, and Gln-209 each contribute to the 3-dehydroquinate site.

Belongs to the type-I 3-dehydroquinase family. Homodimer.

The enzyme catalyses 3-dehydroquinate = 3-dehydroshikimate + H2O. Its pathway is metabolic intermediate biosynthesis; chorismate biosynthesis; chorismate from D-erythrose 4-phosphate and phosphoenolpyruvate: step 3/7. Involved in the third step of the chorismate pathway, which leads to the biosynthesis of aromatic amino acids. Catalyzes the cis-dehydration of 3-dehydroquinate (DHQ) and introduces the first double bond of the aromatic ring to yield 3-dehydroshikimate. This Streptococcus sanguinis (strain SK36) protein is 3-dehydroquinate dehydratase.